A 798-amino-acid chain; its full sequence is Protocadherin beta-14 (798 aa).

An N-terminal signal peptide occupies residues Met1 to Ala26. At Gly27 to Leu686 the chain is on the extracellular side. Cadherin domains lie at Val35–Phe133, Ile138–Phe242, Tyr247–Val347, Ile352–Phe451, and Tyr456–Val561. Cysteines 96 and 102 form a disulfide. Asn169 carries N-linked (GlcNAc...) asparagine glycosylation. N-linked (GlcNAc...) asparagine glycans are attached at residues Asn359, Asn418, and Asn436. An N-linked (GlcNAc...) asparagine glycan is attached at Asn567. The Cadherin 6 domain maps to Gly568 to Leu671. Residues Thr687–Val711 traverse the membrane as a helical segment. Over Arg712–Gln798 the chain is Cytoplasmic.

Its subcellular location is the cell membrane. Its function is as follows. Potential calcium-dependent cell-adhesion protein. May be involved in the establishment and maintenance of specific neuronal connections in the brain. The protein is Protocadherin beta-14 (PCDHB14) of Pan troglodytes (Chimpanzee).